Consider the following 173-residue polypeptide: Small ribosomal subunit protein uS13 (173 aa).

The segment covering 130–143 has biased composition (basic residues); that stretch reads GVRHKRGQKVRGQR. The segment at 130–155 is disordered; the sequence is GVRHKRGQKVRGQRTKSTGRTEGTIG.

This sequence belongs to the universal ribosomal protein uS13 family. In terms of assembly, part of the 30S ribosomal subunit. Forms a loose heterodimer with protein S19. Forms two bridges to the 50S subunit in the 70S ribosome.

In terms of biological role, located at the top of the head of the 30S subunit, it contacts several helices of the 16S rRNA. In the 70S ribosome it contacts the 23S rRNA (bridge B1a) and protein L5 of the 50S subunit (bridge B1b), connecting the 2 subunits; these bridges are implicated in subunit movement. The protein is Small ribosomal subunit protein uS13 of Haloquadratum walsbyi (strain DSM 16790 / HBSQ001).